Here is a 506-residue protein sequence, read N- to C-terminus: SPbeta prophage-derived uncharacterized protein YonE (506 aa).

A disordered region spans residues 473 to 506 (YTFTGNEVGRPNEGNKNNDNTVKSATSNGNDNPI). The span at 486–506 (GNKNNDNTVKSATSNGNDNPI) shows a compositional bias: polar residues.

The polypeptide is SPbeta prophage-derived uncharacterized protein YonE (yonE) (Bacillus subtilis (strain 168)).